We begin with the raw amino-acid sequence, 682 residues long: Polycomb protein suz12-B (682 aa).

The interval 326-355 (DPSDPSTAPVAKPLSTRNSDTSTTESRIST) is disordered. Over residues 340–354 (STRNSDTSTTESRIS) the composition is skewed to polar residues. The C2H2-type zinc finger occupies 408–431 (LHCPWCTLNCRKLYSLLKHLKLSH). The tract at residues 523–599 (RLYFHSDSCM…NQMSQASMLF (77 aa)) is VEFS-box.

The protein belongs to the VEFS (VRN2-EMF2-FIS2-SU(Z)12) family. In terms of assembly, component of the prc2/eed-ezh2 complex.

It localises to the nucleus. Its function is as follows. Polycomb group (PcG) protein. Component of the prc2/eed-ezh2 complex, which methylates 'Lys-9' and 'Lys-27' of histone H3, leading to transcriptional repression of the affected target gene. This is Polycomb protein suz12-B (suz12b) from Danio rerio (Zebrafish).